Consider the following 475-residue polypeptide: Doublecortin domain-containing protein 2 (475 aa).

Doublecortin domains lie at 17-100 (KSVL…LNYL) and 139-221 (CTIF…LPYS). Residues 234–475 (YGQKASSLPP…EANKASSAVA (242 aa)) form a disordered region. Positions 252-272 (GSGNYRQSKSTIGSSDNSSPQ) are enriched in polar residues. At Ser-270 the chain carries Phosphoserine. A compositionally biased stretch (basic and acidic residues) spans 353–365 (EKTSKDANQKEDF). Residues 407–425 (TDEENGEELDQVAEELQPT) show a composition bias toward acidic residues.

Interacts with DVL1, DVL2 and DVL3. Expressed in hair cells of the inner ear.

The protein localises to the cell projection. The protein resides in the cilium. It localises to the cytoplasm. Its subcellular location is the cytoskeleton. It is found in the cilium axoneme. The protein localises to the kinocilium. In terms of biological role, protein that plays a role in the inhibition of canonical Wnt signaling pathway. May be involved in neuronal migration during development of the cerebral neocortex. Involved in the control of ciliogenesis and ciliary length. This is Doublecortin domain-containing protein 2 (Dcdc2) from Mus musculus (Mouse).